We begin with the raw amino-acid sequence, 111 residues long: PCNA-associated factor (111 aa).

Over residues 1–10 the composition is skewed to polar residues; it reads MVRTKANSVP. Residues 1–111 are disordered; that stretch reads MVRTKANSVP…PPDHTDDEKE (111 aa). S8 bears the Phosphoserine mark. K15 is covalently cross-linked (Glycyl lysine isopeptide (Lys-Gly) (interchain with G-Cter in ubiquitin)). A D-box motif is present at residues 23 to 34; it reads RKVLGSSTSAAN. N6-acetyllysine; alternate is present on K24. K24 is covalently cross-linked (Glycyl lysine isopeptide (Lys-Gly) (interchain with G-Cter in ubiquitin); alternate). Residues 27-39 show a composition bias toward polar residues; the sequence is GSSTSAANSTPLS. S28, S31, and S72 each carry phosphoserine. Residues 62-72 carry the PIP-box motif; it reads QKGIGEFFSLS. Residues 74–84 are compositionally biased toward basic and acidic residues; the sequence is KDSEKENRIPE. The KEN box signature appears at 78-80; sequence KEN. Positions 85–97 match the Initiation motif motif; it reads EAGSSGLGKAKRK.

As to quaternary structure, interacts (when monoubiquitinated at Lys-15 and Lys-24) with PCNA. Interacts with isoform 2/p33ING1b of ING1. Interacts with BRCA1. In terms of processing, monoubiquitinated at Lys-15 and Lys-24 during normal S phase, promoting its association with PCNA. Also diubiquitinated at these 2 sites. Following DNA damage, monoubiquitin chains at Lys-15 and Lys-24 are probably extended, leading to disrupt the interaction with PCNA. Polyubiquitinated by the APC/C complex at the mitotic exit, leading to its degradation by the proteasome.

The protein localises to the nucleus. It localises to the cytoplasm. It is found in the perinuclear region. PCNA-binding protein that acts as a regulator of DNA repair during DNA replication. Following DNA damage, the interaction with PCNA is disrupted, facilitating the interaction between monoubiquitinated PCNA and the translesion DNA synthesis DNA polymerase eta (POLH) at stalled replisomes, facilitating the bypass of replication-fork-blocking lesions. Also acts as a regulator of centrosome number. This Bos taurus (Bovine) protein is PCNA-associated factor.